We begin with the raw amino-acid sequence, 438 residues long: MASVVADLPSYGPIAFDQVDNNTNATQLFKNNINKTRMNDLNREETRLKTFTDWPLDWLDKRQLAQTGMYFTHAGDKVKCFFCGVEIGCWEQEDQPVPEHQRWSPNCPLLRRRTTNNVPINAEALDRILPPISYDICGANDSTLEMREHAYAEGVIPMSQLIQSIGMNAVNAAGSVTGTAAPQPRVTVATHASTATQATGDVQPETCRPSAASGNYFPQYPEYAIETARLRTFEAWPRNLKQKPHQLAEAGFFYTGVGDRVRCFSCGGGLMDWNDNDEPWEQHALWLSQCRFVKLMKGQLYIDTVAAKPVLAEEKEESSSIGGVAVASTQASEEEQQTSLSSEEAVSGDVAPSVAPTAATRIFNKIVEATAVATPSTNSSGSTSIPEEKLCKICYGAEYNTAFLPCGHVVACAKCASSVTKCPLCRKPFTDVMRVYFS.

Residues 44 to 110 (EETRLKTFTD…QRWSPNCPLL (67 aa)) form a BIR 1 repeat. A disordered region spans residues 194 to 213 (TATQATGDVQPETCRPSAAS). One copy of the BIR 2 repeat lies at 226-293 (ETARLRTFEA…ALWLSQCRFV (68 aa)). Zn(2+) contacts are provided by cysteine 263, cysteine 266, histidine 283, and cysteine 290. The segment at 322-346 (GGVAVASTQASEEEQQTSLSSEEAV) is disordered. The span at 327 to 345 (ASTQASEEEQQTSLSSEEA) shows a compositional bias: low complexity. The RING-type zinc finger occupies 391 to 426 (CKICYGAEYNTAFLPCGHVVACAKCASSVTKCPLCR).

It belongs to the IAP family. In terms of assembly, interacts (via BIR 2 domain) with Dronc (via residues 114-125). Rpr, hid and grim can outcompete Dronc for binding Diap1 therefore removing Diap1-mediated ubiquitination. Interacts (via BIR 2 domain) with HtrA2; this displaces any bound Dronc. Interacts with Strica. The N-terminally cleaved form interacts with Ubr3 (via UBR-type zinc finger); the interaction promotes the recruitment and uniquitination of substrate capases such as Dronc. Post-translationally, ubiquitinated and degraded by HtrA2 in apoptotic cells; proteolytic cleavage at specific sites in the BIR domain linker region generating inactive fragments. Mutation of one site reduces but does not abolish cleavage as another site is selected by the protease.

The catalysed reaction is S-ubiquitinyl-[E2 ubiquitin-conjugating enzyme]-L-cysteine + [acceptor protein]-L-lysine = [E2 ubiquitin-conjugating enzyme]-L-cysteine + N(6)-ubiquitinyl-[acceptor protein]-L-lysine.. Its function is as follows. Anti-apoptotic protein which functions as a caspase regulator, using its E3 ubiquitin-protein ligase activity to smother caspase activity. Binds, ubiquitinates and inactivates initiator caspase Dronc, and effector caspases Drice and Dcp-1. Acts as a Nedd8-E3 ubiquitin-protein ligase for Drice. Suppresses apoptosis by targeting the apoptosome for ubiquitination and inactivation. Plays an important role in cell motility. Overexpression suppresses rpr and hid-dependent cell death in the eye. Interaction of Diap1 with Dronc is required to suppress Dronc-mediated cell death through Diap1-mediated ubiquitination of Dronc. Acts as a positive regulator of Wnt signaling. This chain is Death-associated inhibitor of apoptosis 1 (Diap1), found in Drosophila melanogaster (Fruit fly).